The chain runs to 183 residues: Ran guanine nucleotide release factor (183 aa).

An interaction with RAN region spans residues 23-66 (ELRQIPDNQEVFAHSQTDQSIIIELLEYQSQVQDADAARYHFED).

This sequence belongs to the MOG1 family. In terms of assembly, monomer. Interacts with ran.

The protein resides in the nucleus. The protein localises to the cytoplasm. Its subcellular location is the perinuclear region. It localises to the cell membrane. Functionally, may regulate the intracellular trafficking of RAN. Promotes guanine nucleotide release from RAN and inhibits binding of new GTP. Plays a role in the regulation of the levels of GTP-bound RAN in the nucleus. Required for normal expression of the ion channel hcn4 and for normal expression of the cardiac transcription factors nkx2.5, gata4 and hand2 during embryonic development. Required for normal embryonic heart development and normal heart rate. This chain is Ran guanine nucleotide release factor, found in Danio rerio (Zebrafish).